The primary structure comprises 266 residues: Small ribosomal subunit protein uS2 (266 aa).

The segment at glutamate 247–asparagine 266 is disordered. Positions glutamate 249–tryptophan 258 are enriched in polar residues.

The protein belongs to the universal ribosomal protein uS2 family.

The protein is Small ribosomal subunit protein uS2 of Mesoplasma florum (strain ATCC 33453 / NBRC 100688 / NCTC 11704 / L1) (Acholeplasma florum).